Consider the following 468-residue polypeptide: MAISVDQTPAGKYPAKVHAKRVAARIQELGHGDSGIIYLEGQKTHMIEDSDGEMPFRQRRNFFYLSGCPLPDSYLTYDIKADKLTIFIPPIDPASVIWSGLPLSVEEALEIYDVDAVLSTAEVNASLAHYCSAQGGKKVFAIADQVSPHITFLPFQEIDFDVLKRAVEESRVVKDSYEIALLRRANEISSKAHVAVFKAATSARNERELEAIFVGACMSSGCREQSYHPIFASGTNAATLHYQKNDEDLVDSVTGQRRLNMLIDAGAEYRNYCADITRVVPLSGKFSPESREIYDIVLEMQNSSLAMIKAGVMWEDVHSTSHRVAIRGLLKLGILRSTEEELFEKGISVAFFPHGLGHYLGMDTHDTGGNPNYADKDPKFKYLRLRGPLASGGVVTVEPGIYFCRFIIDPYLSSPDLGKYINADVLERYWSVGGVRIEDNVVVTDSGYDNLTTAPKLPEEIERLATEK.

D264, D275, E398, and E438 together coordinate Mn(2+).

This sequence belongs to the peptidase M24B family. The cofactor is Mn(2+).

The catalysed reaction is Release of any N-terminal amino acid, including proline, that is linked to proline, even from a dipeptide or tripeptide.. Catalyzes the removal of a penultimate prolyl residue from the N-termini of peptides. The protein is Probable Xaa-Pro aminopeptidase PEPP (PEPP) of Paracoccidioides brasiliensis (strain Pb18).